A 426-amino-acid chain; its full sequence is MTSSADLTNLKELLSLYKSLRFSDSVAIEKYNSLVEWGTSTYWKIGVQKVTNVETSISDYYDEVKNKPFNIDPGYYIFLPVYFGSVFIYSKGKNMVELGSGNSFQIPDEIRSACNKVLDSDNGIDFLRFVLLNNRWIMEDAISKYQSPVNIFKLASEYGLNIPNYLEIEIEEDTLFDDELYSIMERSFDDTFPKISISYIKLGELKRQVVDFFKFSFMYIESIKVDRIGDNIFIPSVITKSGKKILVKDVDHLIRSKVREHTFVKVKKKNTFSILYDYDGNGTETRGEVIKRIIDTIGRDYYVNGKYFSKVGIAGLKQLTNKLDINECATVDELVDEINKSGTVKRKIKNQSVFDLSRECLGYPEADFITLVNNMRFKIENCKVVNFNIENTNCLNNPSIETIYGNFNQFVSIFNTVTDVKKRLFE.

This sequence belongs to the orthopoxvirus OPG148 family. In terms of assembly, interacts with the DNA polymerase catalytic subunit OPG071. Interacts with UDG/OPG116. Component of the uracil-DNA glycosylase(UDG)-OPG148-polymerase complex; OPG148 and UDG form a heterodimeric processivity factor that associates with OPG071 to form the processive polymerase holoenzyme. Interacts with OPG117.

Plays an essential role in viral DNA replication by acting as the polymerase processivity factor together with protein OPG116. Serves as a bridge which links the DNA polymerase OPG071 and the uracil DNA glycosylase. The chain is DNA polymerase processivity factor component OPG148 (OPG148) from Cynomys gunnisoni (Gunnison's prairie dog).